A 441-amino-acid polypeptide reads, in one-letter code: Acidic phosphoprotein (441 aa).

The or 24 signal peptide spans 1-15 (MKAISLGLISSIIFS). N-linked (GlcNAc...) asparagine glycans are attached at residues Asn-21 and Asn-112. A run of 18 repeats spans residues 186 to 193 (EEDPYLLQ), 194 to 201 (EEDALSLM), 202 to 209 (EYDAETLN), 210 to 217 (EGDAETLN), 218 to 225 (EGDAETLN), 226 to 233 (EYDAGTLN), 234 to 241 (EEDAGTTN), 242 to 249 (EAGEGTTN), 250 to 257 (EEGEGAAN), 258 to 265 (EYDAETLN), 266 to 273 (EYDADTLN), 274 to 281 (EYDAGTLN), 282 to 289 (EYDAGTLN), 290 to 297 (EEEGSTTN), 298 to 305 (EAGEGTSN), 306 to 313 (EAGEGTAN), 353 to 360 (KGNENEGE), and 361 to 368 (QKGNENEG). Residues 186-313 (EEDPYLLQEE…SNEAGEGTAN (128 aa)) form a 16 X 8 AA tandem repeats region. The interval 232–416 (LNEEDAGTTN…EKEKKKEKKV (185 aa)) is disordered. The segment covering 238–247 (GTTNEAGEGT) has biased composition (low complexity). Acidic residues predominate over residues 248–273 (TNEEGEGAANEYDAETLNEYDADTLN). Residues 294–306 (STTNEAGEGTSNE) are compositionally biased toward polar residues. Residues 312 to 332 (ANDDEELDEEVASIFDDDEHA) are compositionally biased toward acidic residues. Residues 349 to 371 (ENVKKGNENEGEQKGNENEGEQK) are compositionally biased toward basic and acidic residues. The interval 353-370 (KGNENEGEQKGNENEGEQ) is 2 X 9 AA tandem repeats. Residues 372 to 415 (GKKKKAKEKSKKKVKNKPTMTTKKKKKKEKKKKKKEKEKKKEKK) show a composition bias toward basic residues.

Its subcellular location is the cell membrane. Its function is as follows. During infection, this phosphoprotein probably modulates the structure of the red cell membrane to the advantage of the parasite, although its precise function is not known. In Plasmodium chabaudi, this protein is Acidic phosphoprotein (PCEMA1).